Here is a 109-residue protein sequence, read N- to C-terminus: Homeobox protein E30 (109 aa).

Over residues 1–12 the composition is skewed to basic residues; it reads GPRTRRVKRSHN. The segment at 1–27 is disordered; that stretch reads GPRTRRVKRSHNGKNGSPEEKRPRTAF. The segment at residues 20-79 is a DNA-binding region (homeobox); sequence EKRPRTAFSAEQLARLKREFAENRYLTERRRQQLSRDLGLTEAQIKIWFQNKRAKIKKAS.

It belongs to the engrailed homeobox family.

It is found in the nucleus. In Apis mellifera (Honeybee), this protein is Homeobox protein E30.